The chain runs to 124 residues: Small ribosomal subunit protein uS12 (124 aa).

D89 is modified (3-methylthioaspartic acid).

Belongs to the universal ribosomal protein uS12 family. Part of the 30S ribosomal subunit. Contacts proteins S8 and S17. May interact with IF1 in the 30S initiation complex.

Its function is as follows. With S4 and S5 plays an important role in translational accuracy. Functionally, interacts with and stabilizes bases of the 16S rRNA that are involved in tRNA selection in the A site and with the mRNA backbone. Located at the interface of the 30S and 50S subunits, it traverses the body of the 30S subunit contacting proteins on the other side and probably holding the rRNA structure together. The combined cluster of proteins S8, S12 and S17 appears to hold together the shoulder and platform of the 30S subunit. This is Small ribosomal subunit protein uS12 from Histophilus somni (strain 129Pt) (Haemophilus somnus).